The sequence spans 243 residues: tRNA (guanine-N(1)-)-methyltransferase (243 aa).

Residues Gly108 and 127–132 contribute to the S-adenosyl-L-methionine site; that span reads LGDFVL.

This sequence belongs to the RNA methyltransferase TrmD family. As to quaternary structure, homodimer.

It localises to the cytoplasm. It carries out the reaction guanosine(37) in tRNA + S-adenosyl-L-methionine = N(1)-methylguanosine(37) in tRNA + S-adenosyl-L-homocysteine + H(+). Specifically methylates guanosine-37 in various tRNAs. The chain is tRNA (guanine-N(1)-)-methyltransferase from Streptococcus equi subsp. equi (strain 4047).